A 524-amino-acid chain; its full sequence is Probable 1,3-beta-glucanosyltransferase GAS3 (524 aa).

Positions 1–21 are cleaved as a signal peptide; it reads MQLSKSILLAALAATPSLVNA. A disulfide bridge connects residues C78 and C107. Residues Y96, N168, and E169 each contribute to the (1,3-beta-D-glucosyl)n site. E169 (proton donor) is an active-site residue. A glycan (N-linked (GlcNAc...) asparagine) is linked at N201. Positions 212 and 217 each coordinate (1,3-beta-D-glucosyl)n. 2 disulfide bridges follow: C226–C369 and C254–C286. Residue N269 is glycosylated (N-linked (GlcNAc...) asparagine). The active-site Nucleophile is E283. Residue Y315 coordinates (1,3-beta-D-glucosyl)n. 4 N-linked (GlcNAc...) asparagine glycosylation sites follow: N350, N385, N404, and N422. Residues 461-498 form a disordered region; that stretch reads TSQSSSRSLTSSTSPSSSTGSSSSTGSSSASSSSKSKG. G498 is lipidated: GPI-anchor amidated glycine. The propeptide at 499–524 is removed in mature form; it reads VGNIVNVSFSQSGYLALFAGLISALL.

This sequence belongs to the glycosyl hydrolase 72 family. The GPI-anchor is attached to the protein in the endoplasmic reticulum and serves to target the protein to the cell surface. There, the glucosamine-inositol phospholipid moiety is cleaved off and the GPI-modified mannoprotein is covalently attached via its lipidless GPI glycan remnant to the 1,6-beta-glucan of the outer cell wall layer. Post-translationally, N-glycosylated.

It localises to the secreted. The protein resides in the cell wall. Its subcellular location is the membrane. Its function is as follows. Splits internally a 1,3-beta-glucan molecule and transfers the newly generated reducing end (the donor) to the non-reducing end of another 1,3-beta-glucan molecule (the acceptor) forming a 1,3-beta linkage, resulting in the elongation of 1,3-beta-glucan chains in the cell wall. Involved in cell wall biosynthesis and morphogenesis. The chain is Probable 1,3-beta-glucanosyltransferase GAS3 (GAS3) from Saccharomyces cerevisiae (strain ATCC 204508 / S288c) (Baker's yeast).